The primary structure comprises 506 residues: Protein P7 (506 aa).

RNA-binding stretches follow at residues 128–249 (ISYL…GKRE) and 325–355 (DGSY…FKIS).

This sequence belongs to the phytoreovirus protein P7 family.

The protein resides in the virion. It is found in the host cytoplasm. Functionally, probable component of the transcriptional machinery present in the inner capsid. Displays dsRNA binding activity and may play an important role in the sorting of viral RNA and virion assembly. Together with the RNA-directed RNA polymerase P1 and capping enzyme P5, forms an transcriptional complex positioned near the channels situated at each of the five-fold vertices of the core. The chain is Protein P7 from Alopecurus aequalis (Barnyard grass).